Here is a 201-residue protein sequence, read N- to C-terminus: Probable nicotinate-nucleotide adenylyltransferase (201 aa).

Belongs to the NadD family.

The catalysed reaction is nicotinate beta-D-ribonucleotide + ATP + H(+) = deamido-NAD(+) + diphosphate. Its pathway is cofactor biosynthesis; NAD(+) biosynthesis; deamido-NAD(+) from nicotinate D-ribonucleotide: step 1/1. In terms of biological role, catalyzes the reversible adenylation of nicotinate mononucleotide (NaMN) to nicotinic acid adenine dinucleotide (NaAD). The chain is Probable nicotinate-nucleotide adenylyltransferase from Neisseria gonorrhoeae (strain ATCC 700825 / FA 1090).